The following is a 115-amino-acid chain: Protein SPIRAL1-like 2 (115 aa).

Positions 29–48 are disordered; that stretch reads AKAKPAAAAEKETTPAPVKK.

The protein belongs to the SPIRAL1 family.

In terms of biological role, acts in maintaining the cortical microtubules organization essential for anisotropic cell growth. In Oryza sativa subsp. japonica (Rice), this protein is Protein SPIRAL1-like 2.